The sequence spans 146 residues: MAKEFSRTRRIAQQLQQELAVVLQRDMKDPRIGFVTVNDVDVSRDLSYAKVFVTFFEEDKELVQEKLNALITAAPYIRTLVAGRMKLRVMPEIRFVYDSSLVEGMRMSNLVSQVINSDKAKQQQFGSAEDVTSNDIDEADDTEGKA.

Positions 122 to 134 (QQQFGSAEDVTSN) are enriched in polar residues. The tract at residues 122–146 (QQQFGSAEDVTSNDIDEADDTEGKA) is disordered. Residues 135-146 (DIDEADDTEGKA) show a composition bias toward acidic residues.

The protein belongs to the RbfA family. As to quaternary structure, monomer. Binds 30S ribosomal subunits, but not 50S ribosomal subunits or 70S ribosomes.

Its subcellular location is the cytoplasm. Functionally, one of several proteins that assist in the late maturation steps of the functional core of the 30S ribosomal subunit. Associates with free 30S ribosomal subunits (but not with 30S subunits that are part of 70S ribosomes or polysomes). Required for efficient processing of 16S rRNA. May interact with the 5'-terminal helix region of 16S rRNA. This Shewanella sp. (strain ANA-3) protein is Ribosome-binding factor A.